The primary structure comprises 217 residues: Pyrrolidone-carboxylate peptidase (217 aa).

Catalysis depends on residues E78, C141, and H168.

The protein belongs to the peptidase C15 family. Homotetramer.

It is found in the cytoplasm. The enzyme catalyses Release of an N-terminal pyroglutamyl group from a polypeptide, the second amino acid generally not being Pro.. Removes 5-oxoproline from various penultimate amino acid residues except L-proline. The sequence is that of Pyrrolidone-carboxylate peptidase from Treponema denticola (strain ATCC 35405 / DSM 14222 / CIP 103919 / JCM 8153 / KCTC 15104).